The primary structure comprises 292 residues: Small ribosomal subunit protein uS2 (292 aa).

The interval 265-292 (TETALDWSDEPVAGDWAAEPAADAQGGW) is disordered. Low complexity predominate over residues 277–292 (AGDWAAEPAADAQGGW).

This sequence belongs to the universal ribosomal protein uS2 family. Component of the small ribosomal subunit. Mature ribosomes consist of a small (40S) and a large (60S) subunit. The 40S subunit contains about 33 different proteins and 1 molecule of RNA (18S). The 60S subunit contains about 49 different proteins and 3 molecules of RNA (25S, 5.8S and 5S). Interacts with RPS21.

The protein resides in the cytoplasm. Required for the assembly and/or stability of the 40S ribosomal subunit. Required for the processing of the 20S rRNA-precursor to mature 18S rRNA in a late step of the maturation of 40S ribosomal subunits. The protein is Small ribosomal subunit protein uS2 of Cryptococcus neoformans var. neoformans serotype D (strain B-3501A) (Filobasidiella neoformans).